The sequence spans 588 residues: Interferon-activable protein 208 (588 aa).

The Pyrin domain maps to 5–92 (MVNYYKQIVL…VDILRKEMEK (88 aa)). Disordered stretches follow at residues 157-183 (ATSTSQAEGEPLTPQRFPTTASSSLQT) and 469-526 (EMQN…RRVN). Polar residues-rich tracts occupy residues 172–183 (RFPTTASSSLQT) and 470–487 (MQNPQSGLGTGLSDQPRL).

The protein belongs to the HIN-200 family.

In Mus musculus (Mouse), this protein is Interferon-activable protein 208.